Reading from the N-terminus, the 159-residue chain is 2-C-methyl-D-erythritol 2,4-cyclodiphosphate synthase (159 aa).

2 residues coordinate a divalent metal cation: Asp-8 and His-10. 4-CDP-2-C-methyl-D-erythritol 2-phosphate-binding positions include 8–10 (DSH) and 34–35 (HS). His-42 contacts a divalent metal cation. Residues 56–58 (DIG), 61–65 (FPDSD), Phe-139, and Arg-142 each bind 4-CDP-2-C-methyl-D-erythritol 2-phosphate.

This sequence belongs to the IspF family. Homotrimer. Requires a divalent metal cation as cofactor.

It carries out the reaction 4-CDP-2-C-methyl-D-erythritol 2-phosphate = 2-C-methyl-D-erythritol 2,4-cyclic diphosphate + CMP. The protein operates within isoprenoid biosynthesis; isopentenyl diphosphate biosynthesis via DXP pathway; isopentenyl diphosphate from 1-deoxy-D-xylulose 5-phosphate: step 4/6. Its function is as follows. Involved in the biosynthesis of isopentenyl diphosphate (IPP) and dimethylallyl diphosphate (DMAPP), two major building blocks of isoprenoid compounds. Catalyzes the conversion of 4-diphosphocytidyl-2-C-methyl-D-erythritol 2-phosphate (CDP-ME2P) to 2-C-methyl-D-erythritol 2,4-cyclodiphosphate (ME-CPP) with a corresponding release of cytidine 5-monophosphate (CMP). The sequence is that of 2-C-methyl-D-erythritol 2,4-cyclodiphosphate synthase from Syntrophus aciditrophicus (strain SB).